A 416-amino-acid polypeptide reads, in one-letter code: uncharacterized protein (416 aa).

Residues Cys63, Cys75, Cys78, and Cys152 each contribute to the [4Fe-4S] cluster site. Positions 253, 280, 300, and 348 each coordinate S-adenosyl-L-methionine. Cys374 (nucleophile) is an active-site residue.

The protein belongs to the class I-like SAM-binding methyltransferase superfamily. RNA M5U methyltransferase family.

This is an uncharacterized protein from Agrobacterium fabrum (strain C58 / ATCC 33970) (Agrobacterium tumefaciens (strain C58)).